Here is an 881-residue protein sequence, read N- to C-terminus: Putative leucine-rich repeat receptor-like protein kinase At2g19210 (881 aa).

An N-terminal signal peptide occupies residues 1–25; the sequence is MVHYNFLSLIIFACFFAVFVLLVRA. At 26-518 the chain is on the extracellular side; the sequence is QDQSGFVSID…SDEKTKKNVY (493 aa). Asn143, Asn234, Asn295, Asn310, Asn404, Asn419, Asn435, Asn446, and Asn462 each carry an N-linked (GlcNAc...) asparagine glycan. 2 LRR repeats span residues 438 to 460 and 462 to 483; these read LLHILDLSNNSLTGKIPDFLGNL and NLTELNLEGNKLSGAIPVKLLE. The helical transmembrane segment at 519 to 539 threads the bilayer; sequence IIPLVASVVGVLGLVLAIALF. Residues 540-881 are Cytoplasmic-facing; the sequence is LLYKKRHRRG…FDSGMFPQAR (342 aa). The 275-residue stretch at 576 to 850 folds into the Protein kinase domain; that stretch reads NNFERVLGQG…HVVAELKESV (275 aa). ATP contacts are provided by residues 582-590 and Lys603; that span reads LGQGGFGKV. The residue at position 648 (Tyr648) is a Phosphotyrosine. Asp699 acts as the Proton acceptor in catalysis. Phosphothreonine occurs at positions 734 and 739. Tyr747 is modified (phosphotyrosine). Residues 851-881 form a disordered region; that stretch reads SRARAGGGSGASSVTDPAMTNFDSGMFPQAR.

It belongs to the protein kinase superfamily. Ser/Thr protein kinase family.

The protein localises to the cell membrane. The enzyme catalyses L-seryl-[protein] + ATP = O-phospho-L-seryl-[protein] + ADP + H(+). It carries out the reaction L-threonyl-[protein] + ATP = O-phospho-L-threonyl-[protein] + ADP + H(+). The chain is Putative leucine-rich repeat receptor-like protein kinase At2g19210 from Arabidopsis thaliana (Mouse-ear cress).